The primary structure comprises 442 residues: Mitochondrial distribution and morphology protein 12 (442 aa).

Positions 1 to 442 (MSIDINWEAA…VYPSFWTFLV (442 aa)) constitute an SMP-LTD domain. 3 disordered regions span residues 67 to 125 (NDFY…RVGY), 202 to 277 (LSLA…RRMR), and 364 to 387 (EGYH…RRSN). The segment covering 69-80 (FYEEDEDGEDLS) has biased composition (acidic residues). The span at 90 to 100 (PSSQGLSQSTP) shows a compositional bias: polar residues. The span at 101 to 112 (NGDAGSSNSSSN) shows a compositional bias: low complexity. Basic and acidic residues predominate over residues 213–222 (RQRERARSSD). Low complexity predominate over residues 227-245 (SPQSRSRPSTSSTRQRTST).

The protein belongs to the MDM12 family. In terms of assembly, component of the ER-mitochondria encounter structure (ERMES) or MDM complex, composed of MMM1, MDM10, MDM12 and MDM34. An MMM1 homodimer associates with one molecule of MDM12 on each side in a pairwise head-to-tail manner, and the SMP-LTD domains of MMM1 and MDM12 generate a continuous hydrophobic tunnel for phospholipid trafficking.

The protein localises to the mitochondrion outer membrane. The protein resides in the endoplasmic reticulum membrane. Component of the ERMES/MDM complex, which serves as a molecular tether to connect the endoplasmic reticulum (ER) and mitochondria. Components of this complex are involved in the control of mitochondrial shape and protein biogenesis, and function in nonvesicular lipid trafficking between the ER and mitochondria. MDM12 is required for the interaction of the ER-resident membrane protein MMM1 and the outer mitochondrial membrane-resident beta-barrel protein MDM10. The MDM12-MMM1 subcomplex functions in the major beta-barrel assembly pathway that is responsible for biogenesis of all mitochondrial outer membrane beta-barrel proteins, and acts in a late step after the SAM complex. The MDM10-MDM12-MMM1 subcomplex further acts in the TOM40-specific pathway after the action of the MDM12-MMM1 complex. Essential for establishing and maintaining the structure of mitochondria and maintenance of mtDNA nucleoids. The sequence is that of Mitochondrial distribution and morphology protein 12 from Arthroderma otae (strain ATCC MYA-4605 / CBS 113480) (Microsporum canis).